A 304-amino-acid chain; its full sequence is Retrotransposon Gag-like protein 4 (304 aa).

The CCHC-type zinc-finger motif lies at 276-293 (QLCVYCNQAGHFTRDCLA).

In terms of tissue distribution, in adults, expressed in brain, eye, kidney, ovary and testis. Weakly expressed in thymus, heart and muscle.

Functionally, involved in cognitive function in the brain, possibly via the noradrenergic system. The protein is Retrotransposon Gag-like protein 4 of Mus musculus (Mouse).